The following is a 263-amino-acid chain: MNRIDFKFKELKDQGKKALIPFITAGDPSLDTTVNIVLEMDKKGADIVEIGIPYSDPLADGPIIQGSSQRAIKGGAKIRNIMETVRKIRGKSEIPLVYMVYYSSIFKYGLERFIAEASAVGINGIIIPDLPIEERGDIMDITVKYEVHLIPLVAPTSKRRIQEIAAGGSGFVYCVSKNGVTGVGEKIKTDIKEYMELVGSYTELPKALGFGISGSSMAREFKPYCDGIIIGSAIIDIIYKCKGEKEILDKVGNFISEVKKSLE.

Active-site proton acceptor residues include Glu-49 and Asp-60.

Belongs to the TrpA family. As to quaternary structure, tetramer of two alpha and two beta chains.

The catalysed reaction is (1S,2R)-1-C-(indol-3-yl)glycerol 3-phosphate + L-serine = D-glyceraldehyde 3-phosphate + L-tryptophan + H2O. The protein operates within amino-acid biosynthesis; L-tryptophan biosynthesis; L-tryptophan from chorismate: step 5/5. Functionally, the alpha subunit is responsible for the aldol cleavage of indoleglycerol phosphate to indole and glyceraldehyde 3-phosphate. This Clostridium kluyveri (strain NBRC 12016) protein is Tryptophan synthase alpha chain.